The primary structure comprises 223 residues: Ribose-5-phosphate isomerase A (223 aa).

Substrate contacts are provided by residues 29–32 (TGST), 82–85 (DGAD), and 95–98 (KGGG). Residue Glu-104 is the Proton acceptor of the active site. Lys-122 is a substrate binding site.

The protein belongs to the ribose 5-phosphate isomerase family. Homodimer.

It carries out the reaction aldehydo-D-ribose 5-phosphate = D-ribulose 5-phosphate. It participates in carbohydrate degradation; pentose phosphate pathway; D-ribose 5-phosphate from D-ribulose 5-phosphate (non-oxidative stage): step 1/1. Its function is as follows. Catalyzes the reversible conversion of ribose-5-phosphate to ribulose 5-phosphate. In Neisseria meningitidis serogroup B (strain ATCC BAA-335 / MC58), this protein is Ribose-5-phosphate isomerase A.